The chain runs to 141 residues: Large ribosomal subunit protein bL17 (141 aa).

It belongs to the bacterial ribosomal protein bL17 family. Part of the 50S ribosomal subunit. Contacts protein L32.

This Gluconacetobacter diazotrophicus (strain ATCC 49037 / DSM 5601 / CCUG 37298 / CIP 103539 / LMG 7603 / PAl5) protein is Large ribosomal subunit protein bL17.